We begin with the raw amino-acid sequence, 370 residues long: Glutamate 5-kinase (370 aa).

K17 serves as a coordination point for ATP. The substrate site is built by S57, D144, and N156. Residues 176–177 (SD) and 220–226 (TGGMASK) each bind ATP. The PUA domain maps to 282 to 360 (AGALTLDDGA…HELPVEMRRP (79 aa)).

The protein belongs to the glutamate 5-kinase family.

It is found in the cytoplasm. The enzyme catalyses L-glutamate + ATP = L-glutamyl 5-phosphate + ADP. It functions in the pathway amino-acid biosynthesis; L-proline biosynthesis; L-glutamate 5-semialdehyde from L-glutamate: step 1/2. Functionally, catalyzes the transfer of a phosphate group to glutamate to form L-glutamate 5-phosphate. The sequence is that of Glutamate 5-kinase from Mycolicibacterium smegmatis (strain ATCC 700084 / mc(2)155) (Mycobacterium smegmatis).